We begin with the raw amino-acid sequence, 374 residues long: ORC1-type DNA replication protein 6 (374 aa).

ATP-binding positions include 66–70, Tyr209, and Arg221; that span reads TGKTT.

It belongs to the CDC6/cdc18 family.

Its function is as follows. Involved in regulation of DNA replication. The chain is ORC1-type DNA replication protein 6 (orc6) from Halobacterium salinarum (strain ATCC 700922 / JCM 11081 / NRC-1) (Halobacterium halobium).